A 94-amino-acid polypeptide reads, in one-letter code: Large ribosomal subunit protein uL23 (94 aa).

It belongs to the universal ribosomal protein uL23 family. As to quaternary structure, part of the 50S ribosomal subunit. Contacts protein L29, and trigger factor when it is bound to the ribosome.

Functionally, one of the early assembly proteins it binds 23S rRNA. One of the proteins that surrounds the polypeptide exit tunnel on the outside of the ribosome. Forms the main docking site for trigger factor binding to the ribosome. The chain is Large ribosomal subunit protein uL23 from Exiguobacterium sibiricum (strain DSM 17290 / CCUG 55495 / CIP 109462 / JCM 13490 / 255-15).